Reading from the N-terminus, the 448-residue chain is Phosphoglucosamine mutase (448 aa).

S100 (phosphoserine intermediate) is an active-site residue. Residues S100, D240, D242, and D244 each contribute to the Mg(2+) site. S100 is modified (phosphoserine).

Belongs to the phosphohexose mutase family. The cofactor is Mg(2+). Post-translationally, activated by phosphorylation.

The enzyme catalyses alpha-D-glucosamine 1-phosphate = D-glucosamine 6-phosphate. Its function is as follows. Catalyzes the conversion of glucosamine-6-phosphate to glucosamine-1-phosphate. The protein is Phosphoglucosamine mutase of Alkaliphilus metalliredigens (strain QYMF).